A 202-amino-acid chain; its full sequence is Ras-related protein Rab-18 (202 aa).

Positions 20, 23, 24, 25, 26, 37, 38, 43, 69, 126, 128, and 155 each coordinate GTP. Residues 40–48 (QAATIGVDF) carry the Effector region motif. Residues 183–202 (RPTFRLGQPTDTSSGNLCGC) form a disordered region. The span at 191-202 (PTDTSSGNLCGC) shows a compositional bias: polar residues. Residues Cys200 and Cys202 are each lipidated (S-geranylgeranyl cysteine). Cys202 carries the cysteine methyl ester modification.

It belongs to the small GTPase superfamily. Rab family.

The enzyme catalyses GTP + H2O = GDP + phosphate + H(+). The small GTPases Rab are key regulators of intracellular membrane trafficking, from the formation of transport vesicles to their fusion with membranes. Rabs cycle between an inactive GDP-bound form and an active GTP-bound form that is able to recruit to membranes different sets of downstream effectors directly responsible for vesicle formation, movement, tethering and fusion. Plays a role in apical endocytosis/recycling. May be implicated in transport between the plasma membrane and early endosomes. In Caenorhabditis briggsae, this protein is Ras-related protein Rab-18 (rab-18).